We begin with the raw amino-acid sequence, 206 residues long: Probable GTP-binding protein EngB (206 aa).

The EngB-type G domain maps to His23–Lys202. Residues Gly31 to Ser38, Gly58 to Thr62, Asp83 to Gly86, Thr150 to Asp153, and Phe181 to Ser183 each bind GTP. Mg(2+)-binding residues include Ser38 and Thr60.

This sequence belongs to the TRAFAC class TrmE-Era-EngA-EngB-Septin-like GTPase superfamily. EngB GTPase family. It depends on Mg(2+) as a cofactor.

Functionally, necessary for normal cell division and for the maintenance of normal septation. In Myxococcus xanthus (strain DK1622), this protein is Probable GTP-binding protein EngB.